An 81-amino-acid chain; its full sequence is Putative sulfur carrier protein VNG_5061C/VNG_5236C/VNG_6059C/VNG_6467C (81 aa).

Catalysis depends on Cys-18, which acts as the Cysteine persulfide intermediate.

This sequence belongs to the sulfur carrier protein TusA family.

The polypeptide is Putative sulfur carrier protein VNG_5061C/VNG_5236C/VNG_6059C/VNG_6467C (Halobacterium salinarum (strain ATCC 700922 / JCM 11081 / NRC-1) (Halobacterium halobium)).